Here is a 1326-residue protein sequence, read N- to C-terminus: Paired amphipathic helix protein Sin3-like 4 (1326 aa).

PAH domains lie at 8–78 (QKLT…LPKG), 95–165 (KPVE…LPDT), and 292–367 (IPSS…LAQC). 4 disordered regions span residues 272–299 (DDDS…STYD), 715–812 (VPSR…RAET), 844–864 (SVAG…TEEL), and 927–1000 (SKSK…EGDM). The span at 721 to 737 (GAEDREDAVKSTNHDRE) shows a compositional bias: basic and acidic residues. 4 stretches are compositionally biased toward polar residues: residues 744 to 757 (SPQN…SMRS), 781 to 805 (SSKT…NLTT), 844 to 861 (SVAG…TSGT), and 942 to 961 (PRSS…SGTD). The segment covering 967-981 (DCYREDDIDHNKVES) has biased composition (basic and acidic residues).

Its subcellular location is the nucleus. Functionally, acts as a transcriptional repressor. Plays roles in regulating gene expression and genome stability. The chain is Paired amphipathic helix protein Sin3-like 4 (SNL4) from Arabidopsis thaliana (Mouse-ear cress).